The primary structure comprises 24 residues: Grammistin Pp 4b (24 aa).

In terms of assembly, exists as aggregates of 3-4 molecules. In terms of tissue distribution, expressed by the skin glands.

It is found in the secreted. Functionally, thanks to its abundant amphiphilic alpha-helices, it may integrate into membrane phospholipids, leading to lysis of the membrane. Its hemolytic activity is inhibited by phospholipids, but not by cholesterol. Has antibacterial activity with a broad spectrum against various species of bacteria including both Gram-positive and Gram-negative groups. Also has ichthyotoxic activity. This chain is Grammistin Pp 4b, found in Pogonoperca punctata (Clown grouper).